The sequence spans 136 residues: DNA-directed RNA polymerase subunit omega (136 aa).

This sequence belongs to the RNA polymerase subunit omega family. The RNAP catalytic core consists of 2 alpha, 1 beta, 1 beta' and 1 omega subunit. When a sigma factor is associated with the core the holoenzyme is formed, which can initiate transcription.

The catalysed reaction is RNA(n) + a ribonucleoside 5'-triphosphate = RNA(n+1) + diphosphate. Its function is as follows. Promotes RNA polymerase assembly. Latches the N- and C-terminal regions of the beta' subunit thereby facilitating its interaction with the beta and alpha subunits. In Methylorubrum extorquens (strain CM4 / NCIMB 13688) (Methylobacterium extorquens), this protein is DNA-directed RNA polymerase subunit omega.